The primary structure comprises 73 residues: MPALHIEDLPEKEKLKMEVEQLRKEVKLQRQQVSKCSEEIKNYIEERSGEDPLVKGIPEDKNPFKEKGSCVIS.

Residues 51–73 form a disordered region; it reads DPLVKGIPEDKNPFKEKGSCVIS. A Cysteine methyl ester modification is found at cysteine 70. Cysteine 70 carries S-farnesyl cysteine lipidation. Positions 71 to 73 are cleaved as a propeptide — removed in mature form; the sequence is VIS.

Belongs to the G protein gamma family. In terms of assembly, g proteins are composed of 3 units, alpha, beta and gamma. Interacts with beta-1 and beta-3, but not with beta-2. In terms of tissue distribution, abundantly expressed in all tissues tested except for brain.

It localises to the cell membrane. Its function is as follows. Guanine nucleotide-binding proteins (G proteins) are involved as a modulator or transducer in various transmembrane signaling systems. The beta and gamma chains are required for the GTPase activity, for replacement of GDP by GTP, and for G protein-effector interaction. In Homo sapiens (Human), this protein is Guanine nucleotide-binding protein G(I)/G(S)/G(O) subunit gamma-11 (GNG11).